A 564-amino-acid polypeptide reads, in one-letter code: Ribulokinase (564 aa).

Belongs to the ribulokinase family.

The catalysed reaction is D-ribulose + ATP = D-ribulose 5-phosphate + ADP + H(+). It carries out the reaction L-ribulose + ATP = L-ribulose 5-phosphate + ADP + H(+). It participates in carbohydrate degradation; L-arabinose degradation via L-ribulose; D-xylulose 5-phosphate from L-arabinose (bacterial route): step 2/3. This is Ribulokinase from Geobacillus thermodenitrificans (strain NG80-2).